The chain runs to 1516 residues: Mediator of RNA polymerase II transcription subunit 14 (1516 aa).

Disordered regions lie at residues 22–98 (LSSQ…EVPA) and 1434–1516 (MHRQ…YPPQ). Over residues 34–47 (SPAAPISPAPSGSA) the composition is skewed to low complexity. A compositionally biased stretch (basic and acidic residues) spans 72–83 (SEVDVKSIHSSD). A compositionally biased stretch (low complexity) spans 1463–1473 (SHQQHMMNPGS). Residues 1474–1483 (VGPGSVGGPG) show a composition bias toward gly residues. Residues 1502 to 1516 (QSYHHPLHHQQYPPQ) show a composition bias toward low complexity.

It belongs to the Mediator complex subunit 14 family. In terms of assembly, component of the Mediator complex.

The protein resides in the nucleus. Component of the Mediator complex, a coactivator involved in the regulated transcription of nearly all RNA polymerase II-dependent genes. Mediator functions as a bridge to convey information from gene-specific regulatory proteins to the basal RNA polymerase II transcription machinery. Mediator is recruited to promoters by direct interactions with regulatory proteins and serves as a scaffold for the assembly of a functional preinitiation complex with RNA polymerase II and the general transcription factors. Required for transcription in the embryo and for phosphorylation of the RNA polymerase II C-terminal domain repeat. The polypeptide is Mediator of RNA polymerase II transcription subunit 14 (rgr-1) (Caenorhabditis elegans).